A 726-amino-acid chain; its full sequence is Peroxisomal fatty acid beta-oxidation multifunctional protein (726 aa).

This sequence in the N-terminal section; belongs to the enoyl-CoA hydratase/isomerase family. It in the central section; belongs to the 3-hydroxyacyl-CoA dehydrogenase family. Monomer.

The protein localises to the peroxisome. It localises to the cytoplasm. Its subcellular location is the cytoskeleton. The enzyme catalyses a (3S)-3-hydroxyacyl-CoA = a (2E)-enoyl-CoA + H2O. It catalyses the reaction a 4-saturated-(3S)-3-hydroxyacyl-CoA = a (3E)-enoyl-CoA + H2O. It carries out the reaction a (3Z)-enoyl-CoA = a 4-saturated (2E)-enoyl-CoA. The catalysed reaction is a (3E)-enoyl-CoA = a 4-saturated (2E)-enoyl-CoA. The enzyme catalyses (3S)-3-hydroxybutanoyl-CoA = (3R)-3-hydroxybutanoyl-CoA. It catalyses the reaction a (3S)-3-hydroxyacyl-CoA + NAD(+) = a 3-oxoacyl-CoA + NADH + H(+). The protein operates within lipid metabolism; fatty acid beta-oxidation. Multifunctional enzyme involved in fatty acid beta-oxidation. Also binds to RNA and microtubules. Possible role in subcellular mRNA localization and RNA-cytoskeleton interactions. This is Peroxisomal fatty acid beta-oxidation multifunctional protein (MFP) from Oryza sativa subsp. japonica (Rice).